Reading from the N-terminus, the 204-residue chain is N-(5'-phosphoribosyl)anthranilate isomerase (204 aa).

Belongs to the TrpF family.

The enzyme catalyses N-(5-phospho-beta-D-ribosyl)anthranilate = 1-(2-carboxyphenylamino)-1-deoxy-D-ribulose 5-phosphate. It participates in amino-acid biosynthesis; L-tryptophan biosynthesis; L-tryptophan from chorismate: step 3/5. In Desulforudis audaxviator (strain MP104C), this protein is N-(5'-phosphoribosyl)anthranilate isomerase.